The following is a 446-amino-acid chain: Glutamine synthetase (446 aa).

Residues 18–103 (ENVRYLRLQF…LICDVYKTDG (86 aa)) form the GS beta-grasp domain. One can recognise a GS catalytic domain in the interval 110–446 (PRANLKRVLK…WERDQYMKQY (337 aa)). Residues Glu134 and Glu136 each coordinate Mg(2+). Glu186 lines the ATP pocket. 2 residues coordinate Mg(2+): Glu191 and Glu198. Residues 242–243 (NG) and Gly243 contribute to the L-glutamate site. Residue His247 participates in Mg(2+) binding. Ser251 contacts ATP. L-glutamate-binding residues include Arg300, Glu306, and Arg318. The ATP site is built by Arg318 and Arg323. Glu335 serves as a coordination point for Mg(2+). Arg337 serves as a coordination point for L-glutamate.

The protein belongs to the glutamine synthetase family. In terms of assembly, oligomer of 12 subunits arranged in the form of two hexagons. In its feedback-inhibited form, interacts with TnrA in order to block its DNA-binding activity. Mg(2+) serves as cofactor.

It localises to the cytoplasm. The catalysed reaction is L-glutamate + NH4(+) + ATP = L-glutamine + ADP + phosphate + H(+). Its activity is regulated as follows. Inhibited by glutamine. In terms of biological role, glutamine synthetase (GS) is an unusual multitasking protein that functions as an enzyme, a transcription coregulator, and a chaperone in ammonium assimilation and in the regulation of genes involved in nitrogen metabolism. It catalyzes the ATP-dependent biosynthesis of glutamine from glutamate and ammonia. Feedback-inhibited GlnA also interacts with and regulates the activity of the transcriptional regulator TnrA. During nitrogen limitation, TnrA is in its DNA-binding active state and turns on the transcription of genes required for nitrogen assimilation. Under conditions of nitrogen excess, feedback-inhibited GlnA forms a stable complex with TnrA, which inhibits its DNA-binding activity. In contrast, feedback-inhibited GlnA acts as a chaperone to stabilize the DNA-binding activity of GlnR, which represses the transcription of nitrogen assimilation genes. This is Glutamine synthetase from Staphylococcus aureus (strain N315).